A 137-amino-acid chain; its full sequence is Methylglyoxal synthase (137 aa).

In terms of domain architecture, MGS-like spans 1 to 137; it reads MKIALIAHDK…DLLRGEEPNV (137 aa). Residues histidine 8, lysine 12, 34-37, and 54-55 each bind substrate; these read TGTT and SG. The active-site Proton donor/acceptor is the aspartate 60. Histidine 87 serves as a coordination point for substrate.

The protein belongs to the methylglyoxal synthase family.

The enzyme catalyses dihydroxyacetone phosphate = methylglyoxal + phosphate. Its function is as follows. Catalyzes the formation of methylglyoxal from dihydroxyacetone phosphate. In Bacillus subtilis (strain 168), this protein is Methylglyoxal synthase.